Consider the following 319-residue polypeptide: Protein sprouty homolog 1 (319 aa).

Position 1 is an N-acetylmethionine (methionine 1). 2 disordered regions span residues 54–78 and 100–160; these read TEGP…ERTH and AVLP…QPKQ. The span at 69–78 shows a compositional bias: basic and acidic residues; it reads PRQEKHERTH. Residues 112-131 are compositionally biased toward low complexity; it reads SRSTSTGSAASSGSNSSASS. Residues 183 to 295 form the SPR domain; sequence QCGKCKCGEC…CYDWIHRPGC (113 aa).

The protein belongs to the sprouty family. As to quaternary structure, forms heterodimers with SPRY2. Interacts with TESK1. Interacts with CAV1 (via C-terminus).

It is found in the cytoplasm. Its subcellular location is the membrane. Functionally, inhibits fibroblast growth factor (FGF)-induced retinal lens fiber differentiation, probably by inhibiting FGF-mediated phosphorylation of ERK1/2. Inhibits TGFB-induced epithelial-to-mesenchymal transition in lens epithelial cells. The protein is Protein sprouty homolog 1 (SPRY1) of Homo sapiens (Human).